The sequence spans 243 residues: Adapter protein MecA (243 aa).

Positions 119–140 (NQVEDGQGIAHNPTKDTNDLDP) are disordered.

It belongs to the MecA family. As to quaternary structure, homodimer.

In terms of biological role, enables the recognition and targeting of unfolded and aggregated proteins to the ClpC protease or to other proteins involved in proteolysis. The chain is Adapter protein MecA from Lactiplantibacillus plantarum (strain ATCC BAA-793 / NCIMB 8826 / WCFS1) (Lactobacillus plantarum).